A 179-amino-acid polypeptide reads, in one-letter code: ATP synthase subunit delta (179 aa).

It belongs to the ATPase delta chain family. F-type ATPases have 2 components, F(1) - the catalytic core - and F(0) - the membrane proton channel. F(1) has five subunits: alpha(3), beta(3), gamma(1), delta(1), epsilon(1). F(0) has three main subunits: a(1), b(2) and c(10-14). The alpha and beta chains form an alternating ring which encloses part of the gamma chain. F(1) is attached to F(0) by a central stalk formed by the gamma and epsilon chains, while a peripheral stalk is formed by the delta and b chains.

Its subcellular location is the cell inner membrane. Its function is as follows. F(1)F(0) ATP synthase produces ATP from ADP in the presence of a proton or sodium gradient. F-type ATPases consist of two structural domains, F(1) containing the extramembraneous catalytic core and F(0) containing the membrane proton channel, linked together by a central stalk and a peripheral stalk. During catalysis, ATP synthesis in the catalytic domain of F(1) is coupled via a rotary mechanism of the central stalk subunits to proton translocation. This protein is part of the stalk that links CF(0) to CF(1). It either transmits conformational changes from CF(0) to CF(1) or is implicated in proton conduction. This chain is ATP synthase subunit delta, found in Cupriavidus pinatubonensis (strain JMP 134 / LMG 1197) (Cupriavidus necator (strain JMP 134)).